The sequence spans 154 residues: Interleukin-2 (154 aa).

Positions 1-20 are cleaved as a signal peptide; that stretch reads MYRMQLLSCIALSLALITNS. Residue Thr23 is glycosylated (O-linked (GalNAc...) threonine). A disulfide bond links Cys78 and Cys126.

It belongs to the IL-2 family.

It localises to the secreted. In terms of biological role, cytokine produced by activated CD4-positive helper T-cells and to a lesser extend activated CD8-positive T-cells and natural killer (NK) cells that plays pivotal roles in the immune response and tolerance. Binds to a receptor complex composed of either the high-affinity trimeric IL-2R (IL2RA/CD25, IL2RB/CD122 and IL2RG/CD132) or the low-affinity dimeric IL-2R (IL2RB and IL2RG). Interaction with the receptor leads to oligomerization and conformation changes in the IL-2R subunits resulting in downstream signaling starting with phosphorylation of JAK1 and JAK3. In turn, JAK1 and JAK3 phosphorylate the receptor to form a docking site leading to the phosphorylation of several substrates including STAT5. This process leads to activation of several pathways including STAT, phosphoinositide-3-kinase/PI3K and mitogen-activated protein kinase/MAPK pathways. Functions as a T-cell growth factor and can increase NK-cell cytolytic activity as well. Promotes strong proliferation of activated B-cells and subsequently immunoglobulin production. Plays a pivotal role in regulating the adaptive immune system by controlling the survival and proliferation of regulatory T-cells, which are required for the maintenance of immune tolerance. Moreover, participates in the differentiation and homeostasis of effector T-cell subsets, including Th1, Th2, Th17 as well as memory CD8-positive T-cells. This is Interleukin-2 (IL2) from Papio hamadryas (Hamadryas baboon).